The chain runs to 273 residues: Petrobactin import ATP-binding protein FpuD (273 aa).

The 237-residue stretch at 5–241 (LETKRLTLSY…KLVRDVFRME (237 aa)) folds into the ABC transporter domain. An ATP-binding site is contributed by 37–44 (GSNGCGKS).

This sequence belongs to the ABC transporter superfamily. The complex is composed of two ATP-binding proteins (FpuD), two transmembrane proteins (FpuB) and a solute-binding protein (FpuA).

The protein resides in the cell membrane. It catalyses the reaction a Fe(III)-siderophore(out) + ATP + H2O = a Fe(III)-siderophore(in) + ADP + phosphate + H(+). In terms of biological role, part of an ABC transporter complex involved in ferric-petrobactin uptake. Probably responsible for energy coupling to the transport system. The polypeptide is Petrobactin import ATP-binding protein FpuD (Bacillus anthracis).